A 350-amino-acid polypeptide reads, in one-letter code: Anthranilate phosphoribosyltransferase (350 aa).

5-phospho-alpha-D-ribose 1-diphosphate contacts are provided by residues Gly93, 96–97 (GD), Thr101, 103–106 (NIST), 121–129 (KHGNRSASG), and Ser133. Position 93 (Gly93) interacts with anthranilate. Ser105 provides a ligand contact to Mg(2+). Asn124 is a binding site for anthranilate. Anthranilate is bound at residue Arg179. Mg(2+) is bound by residues Asp238 and Glu239.

This sequence belongs to the anthranilate phosphoribosyltransferase family. In terms of assembly, homodimer. Mg(2+) serves as cofactor.

The catalysed reaction is N-(5-phospho-beta-D-ribosyl)anthranilate + diphosphate = 5-phospho-alpha-D-ribose 1-diphosphate + anthranilate. The protein operates within amino-acid biosynthesis; L-tryptophan biosynthesis; L-tryptophan from chorismate: step 2/5. Catalyzes the transfer of the phosphoribosyl group of 5-phosphorylribose-1-pyrophosphate (PRPP) to anthranilate to yield N-(5'-phosphoribosyl)-anthranilate (PRA). In Parasynechococcus marenigrum (strain WH8102), this protein is Anthranilate phosphoribosyltransferase.